Consider the following 236-residue polypeptide: Ribose-5-phosphate isomerase A (236 aa).

Substrate is bound by residues 29–32 (SGST), 86–89 (DGAD), and 99–102 (KGGG). The active-site Proton acceptor is the glutamate 108. Lysine 126 is a substrate binding site.

This sequence belongs to the ribose 5-phosphate isomerase family. In terms of assembly, homodimer.

It carries out the reaction aldehydo-D-ribose 5-phosphate = D-ribulose 5-phosphate. The protein operates within carbohydrate degradation; pentose phosphate pathway; D-ribose 5-phosphate from D-ribulose 5-phosphate (non-oxidative stage): step 1/1. Catalyzes the reversible conversion of ribose-5-phosphate to ribulose 5-phosphate. This is Ribose-5-phosphate isomerase A from Prochlorococcus marinus (strain NATL1A).